The sequence spans 390 residues: Leu/Ile/Val-binding protein homolog 6 (390 aa).

A signal peptide spans 1–21 (MKKIALTALAVFSLAASAAYA).

Belongs to the leucine-binding protein family.

Component of an amino-acid transport system. This is Leu/Ile/Val-binding protein homolog 6 from Brucella melitensis biotype 1 (strain ATCC 23456 / CCUG 17765 / NCTC 10094 / 16M).